The chain runs to 592 residues: Aspartate--tRNA(Asp/Asn) ligase (592 aa).

Glu-177 is a binding site for L-aspartate. The segment at Gln-201–Lys-204 is aspartate. The L-aspartate site is built by Arg-223 and His-452. An ATP-binding site is contributed by Arg-223 to Glu-225. Glu-486 provides a ligand contact to ATP. Arg-493 is an L-aspartate binding site. An ATP-binding site is contributed by Gly-538–Arg-541.

This sequence belongs to the class-II aminoacyl-tRNA synthetase family. Type 1 subfamily. As to quaternary structure, homodimer.

The protein localises to the cytoplasm. The catalysed reaction is tRNA(Asx) + L-aspartate + ATP = L-aspartyl-tRNA(Asx) + AMP + diphosphate. Aspartyl-tRNA synthetase with relaxed tRNA specificity since it is able to aspartylate not only its cognate tRNA(Asp) but also tRNA(Asn). Reaction proceeds in two steps: L-aspartate is first activated by ATP to form Asp-AMP and then transferred to the acceptor end of tRNA(Asp/Asn). This chain is Aspartate--tRNA(Asp/Asn) ligase, found in Anaplasma marginale (strain Florida).